A 317-amino-acid polypeptide reads, in one-letter code: Acetyl-coenzyme A carboxylase carboxyl transferase subunit alpha (317 aa).

Residues 40 to 293 form the CoA carboxyltransferase C-terminal domain; it reads LEKRSADALK…GDIITASLRS (254 aa).

It belongs to the AccA family. In terms of assembly, acetyl-CoA carboxylase is a heterohexamer composed of biotin carboxyl carrier protein (AccB), biotin carboxylase (AccC) and two subunits each of ACCase subunit alpha (AccA) and ACCase subunit beta (AccD).

Its subcellular location is the cytoplasm. The enzyme catalyses N(6)-carboxybiotinyl-L-lysyl-[protein] + acetyl-CoA = N(6)-biotinyl-L-lysyl-[protein] + malonyl-CoA. It participates in lipid metabolism; malonyl-CoA biosynthesis; malonyl-CoA from acetyl-CoA: step 1/1. Its function is as follows. Component of the acetyl coenzyme A carboxylase (ACC) complex. First, biotin carboxylase catalyzes the carboxylation of biotin on its carrier protein (BCCP) and then the CO(2) group is transferred by the carboxyltransferase to acetyl-CoA to form malonyl-CoA. The chain is Acetyl-coenzyme A carboxylase carboxyl transferase subunit alpha from Brucella anthropi (strain ATCC 49188 / DSM 6882 / CCUG 24695 / JCM 21032 / LMG 3331 / NBRC 15819 / NCTC 12168 / Alc 37) (Ochrobactrum anthropi).